Consider the following 252-residue polypeptide: 2-succinyl-6-hydroxy-2,4-cyclohexadiene-1-carboxylate synthase (252 aa).

The protein belongs to the AB hydrolase superfamily. MenH family. As to quaternary structure, monomer.

The catalysed reaction is 5-enolpyruvoyl-6-hydroxy-2-succinyl-cyclohex-3-ene-1-carboxylate = (1R,6R)-6-hydroxy-2-succinyl-cyclohexa-2,4-diene-1-carboxylate + pyruvate. Its pathway is quinol/quinone metabolism; 1,4-dihydroxy-2-naphthoate biosynthesis; 1,4-dihydroxy-2-naphthoate from chorismate: step 3/7. It functions in the pathway quinol/quinone metabolism; menaquinone biosynthesis. Its function is as follows. Catalyzes a proton abstraction reaction that results in 2,5-elimination of pyruvate from 2-succinyl-5-enolpyruvyl-6-hydroxy-3-cyclohexene-1-carboxylate (SEPHCHC) and the formation of 2-succinyl-6-hydroxy-2,4-cyclohexadiene-1-carboxylate (SHCHC). The polypeptide is 2-succinyl-6-hydroxy-2,4-cyclohexadiene-1-carboxylate synthase (Escherichia coli (strain UTI89 / UPEC)).